A 153-amino-acid chain; its full sequence is Transthyretin (153 aa).

An N-terminal signal peptide occupies residues 1–19 (MASFKSFLLLALLAIVSEA). A Sulfocysteine modification is found at Cys-34. Residues Lys-39 and Glu-78 each coordinate L-thyroxine. N-linked (GlcNAc...) asparagine glycosylation is present at Asn-81. Ser-141 contributes to the L-thyroxine binding site.

This sequence belongs to the transthyretin family. As to quaternary structure, homotetramer. Dimer of dimers. In the homotetramer, subunits assemble around a central channel that can accommodate two ligand molecules. Interacts with rbp4. Sulfonation of the reactive cysteine Cys-34 enhances the stability of the native conformation of TTR, avoiding misassembly of the protein leading to amyloid formation. As to expression, detected in plasma (at protein level). Expressed during metamorphosis in tadpole liver, but not in tadpole brain nor adult liver. Between 1.5 and 3 days of development, also expressed in the mesoderm of the kidney.

The protein localises to the secreted. In terms of biological role, thyroid hormone-binding protein, with a much higher binding affinity for triiodothyronine (T3) than for thyroxine (T4). Probably transports triiodothyronine from the bloodstream to the brain. The chain is Transthyretin (ttr) from Xenopus laevis (African clawed frog).